Here is a 93-residue protein sequence, read N- to C-terminus: Putative transmembrane protein ORF25 (93 aa).

Helical transmembrane passes span 1–21, 22–42, and 60–80; these read MAGIHVVLGLFEGALFTNVNA, FLVLMIILSGLIGLFSGYASI, and LWIFNSMLYIIMTIVFVVMSL.

The protein localises to the host membrane. The sequence is that of Putative transmembrane protein ORF25 from His1 virus (isolate Australia/Victoria) (His1V).